A 475-amino-acid chain; its full sequence is Rho GTPase-activating protein 15 (475 aa).

The tract at residues 1-22 is disordered; sequence MERSTTSDTASEKPNPSHSTGA. A PH domain is found at 80–190; that stretch reads VVEKEGYLLK…WFHAIKNAID (111 aa). One can recognise a Rho-GAP domain in the interval 281–470; that stretch reads SHLHLVCEHE…LMLSEYSKIF (190 aa).

Its subcellular location is the cytoplasm. It localises to the membrane. Its function is as follows. GTPase activator for the Rho-type GTPases by converting them to an inactive GDP-bound state. The protein is Rho GTPase-activating protein 15 (ARHGAP15) of Gallus gallus (Chicken).